The sequence spans 182 residues: ATP-dependent protease subunit HslV (182 aa).

The active site involves Thr-10. Ala-166, Cys-169, and Ser-172 together coordinate Na(+).

The protein belongs to the peptidase T1B family. HslV subfamily. In terms of assembly, a double ring-shaped homohexamer of HslV is capped on each side by a ring-shaped HslU homohexamer. The assembly of the HslU/HslV complex is dependent on binding of ATP.

Its subcellular location is the cytoplasm. It carries out the reaction ATP-dependent cleavage of peptide bonds with broad specificity.. With respect to regulation, allosterically activated by HslU binding. Its function is as follows. Protease subunit of a proteasome-like degradation complex believed to be a general protein degrading machinery. The protein is ATP-dependent protease subunit HslV of Rickettsia typhi (strain ATCC VR-144 / Wilmington).